A 346-amino-acid chain; its full sequence is 4-hydroxy-3-methylbut-2-enyl diphosphate reductase (346 aa).

C19 lines the [4Fe-4S] cluster pocket. Residues H48 and H84 each contribute to the (2E)-4-hydroxy-3-methylbut-2-enyl diphosphate site. Residues H48 and H84 each contribute to the dimethylallyl diphosphate site. Isopentenyl diphosphate-binding residues include H48 and H84. Residue C106 participates in [4Fe-4S] cluster binding. Residue H134 participates in (2E)-4-hydroxy-3-methylbut-2-enyl diphosphate binding. H134 serves as a coordination point for dimethylallyl diphosphate. H134 serves as a coordination point for isopentenyl diphosphate. E136 functions as the Proton donor in the catalytic mechanism. (2E)-4-hydroxy-3-methylbut-2-enyl diphosphate is bound at residue T175. C205 is a [4Fe-4S] cluster binding site. Residues S233, S234, N235, and S278 each contribute to the (2E)-4-hydroxy-3-methylbut-2-enyl diphosphate site. Dimethylallyl diphosphate-binding residues include S233, S234, N235, and S278. Isopentenyl diphosphate contacts are provided by S233, S234, N235, and S278.

The protein belongs to the IspH family. The cofactor is [4Fe-4S] cluster.

It catalyses the reaction isopentenyl diphosphate + 2 oxidized [2Fe-2S]-[ferredoxin] + H2O = (2E)-4-hydroxy-3-methylbut-2-enyl diphosphate + 2 reduced [2Fe-2S]-[ferredoxin] + 2 H(+). It carries out the reaction dimethylallyl diphosphate + 2 oxidized [2Fe-2S]-[ferredoxin] + H2O = (2E)-4-hydroxy-3-methylbut-2-enyl diphosphate + 2 reduced [2Fe-2S]-[ferredoxin] + 2 H(+). It functions in the pathway isoprenoid biosynthesis; dimethylallyl diphosphate biosynthesis; dimethylallyl diphosphate from (2E)-4-hydroxy-3-methylbutenyl diphosphate: step 1/1. It participates in isoprenoid biosynthesis; isopentenyl diphosphate biosynthesis via DXP pathway; isopentenyl diphosphate from 1-deoxy-D-xylulose 5-phosphate: step 6/6. Catalyzes the conversion of 1-hydroxy-2-methyl-2-(E)-butenyl 4-diphosphate (HMBPP) into a mixture of isopentenyl diphosphate (IPP) and dimethylallyl diphosphate (DMAPP). Acts in the terminal step of the DOXP/MEP pathway for isoprenoid precursor biosynthesis. The chain is 4-hydroxy-3-methylbut-2-enyl diphosphate reductase from Brucella abortus (strain S19).